We begin with the raw amino-acid sequence, 537 residues long: Cytochrome P450 4F6 (537 aa).

Cys468 serves as a coordination point for heme.

It belongs to the cytochrome P450 family. Heme is required as a cofactor. In terms of tissue distribution, high expression in liver and kidney. Lower expression in brain.

Its subcellular location is the endoplasmic reticulum membrane. It localises to the microsome membrane. It catalyses the reaction an organic molecule + reduced [NADPH--hemoprotein reductase] + O2 = an alcohol + oxidized [NADPH--hemoprotein reductase] + H2O + H(+). The chain is Cytochrome P450 4F6 (Cyp4f6) from Rattus norvegicus (Rat).